The sequence spans 283 residues: Bifunctional protein FolD (283 aa).

Residues 163–165 (GRS), Ser188, and Ile229 each bind NADP(+).

Belongs to the tetrahydrofolate dehydrogenase/cyclohydrolase family. In terms of assembly, homodimer.

It carries out the reaction (6R)-5,10-methylene-5,6,7,8-tetrahydrofolate + NADP(+) = (6R)-5,10-methenyltetrahydrofolate + NADPH. The catalysed reaction is (6R)-5,10-methenyltetrahydrofolate + H2O = (6R)-10-formyltetrahydrofolate + H(+). It participates in one-carbon metabolism; tetrahydrofolate interconversion. Its function is as follows. Catalyzes the oxidation of 5,10-methylenetetrahydrofolate to 5,10-methenyltetrahydrofolate and then the hydrolysis of 5,10-methenyltetrahydrofolate to 10-formyltetrahydrofolate. The sequence is that of Bifunctional protein FolD from Campylobacter fetus subsp. fetus (strain 82-40).